A 236-amino-acid chain; its full sequence is Purine nucleoside phosphorylase DeoD-type (236 aa).

Position 4 (His4) interacts with a purine D-ribonucleoside. Residues Gly20, Arg24, Arg43, and Arg87 to Ser90 each bind phosphate. A purine D-ribonucleoside-binding positions include Glu179–Glu181 and Ser203–Asp204. Asp204 acts as the Proton donor in catalysis.

The protein belongs to the PNP/UDP phosphorylase family. As to quaternary structure, homohexamer; trimer of homodimers.

The catalysed reaction is a purine D-ribonucleoside + phosphate = a purine nucleobase + alpha-D-ribose 1-phosphate. The enzyme catalyses a purine 2'-deoxy-D-ribonucleoside + phosphate = a purine nucleobase + 2-deoxy-alpha-D-ribose 1-phosphate. Catalyzes the reversible phosphorolytic breakdown of the N-glycosidic bond in the beta-(deoxy)ribonucleoside molecules, with the formation of the corresponding free purine bases and pentose-1-phosphate. The polypeptide is Purine nucleoside phosphorylase DeoD-type (Limosilactobacillus reuteri (strain DSM 20016) (Lactobacillus reuteri)).